The sequence spans 110 residues: Large ribosomal subunit protein uL22 (110 aa).

This sequence belongs to the universal ribosomal protein uL22 family. Part of the 50S ribosomal subunit.

In terms of biological role, this protein binds specifically to 23S rRNA; its binding is stimulated by other ribosomal proteins, e.g. L4, L17, and L20. It is important during the early stages of 50S assembly. It makes multiple contacts with different domains of the 23S rRNA in the assembled 50S subunit and ribosome. The globular domain of the protein is located near the polypeptide exit tunnel on the outside of the subunit, while an extended beta-hairpin is found that lines the wall of the exit tunnel in the center of the 70S ribosome. This chain is Large ribosomal subunit protein uL22, found in Bdellovibrio bacteriovorus (strain ATCC 15356 / DSM 50701 / NCIMB 9529 / HD100).